We begin with the raw amino-acid sequence, 505 residues long: MAHNEAVDVVHVVLVGAGIMSATLAVLLKELDPAISLEVVELMDSGAAESSNPWNNAGTGHAGLCELNYTPQAADGNVDIKKAVHINTQFEVSKQFWTYLTRKGTFGSSKSFIAPVPHLSFVQGEKGVSFLKKRFELMHQHHAFADMEYTEDKARMAEWMPLMMPGRPADEVIAATRVMNGTDVNFGALTNQLLKHLTSAPDTQVKYCKRVTGLKRNGSGWTVSIKDVNSGSSRDVDAKFVFLGAAGAALPLLQASGIEESKGFGGFPVSGQWLRCDNPEVVKHHQAKVYSQAAVGSPPMSVPHLTPVWSMARNPCLFGPYAGFTTKFLKHGSIMDLPLSVRAGNIGPMLAVARDNMDLTKYLISEVMQSMEQRLESLRRFYPEAKAEDWRLEVAGQRVQIIKKDPKKGGVLQFGTELVAAKDGSLAALLGASPGASVTVSIMLELIERCFPDKAKGEWATKLAEIFPAREKVLETDAALYRKINAQNNIALELVEESSETQSYA.

The protein belongs to the MQO family. FAD serves as cofactor.

The catalysed reaction is (S)-malate + a quinone = a quinol + oxaloacetate. It participates in carbohydrate metabolism; tricarboxylic acid cycle; oxaloacetate from (S)-malate (quinone route): step 1/1. This Pseudomonas fluorescens protein is Probable malate:quinone oxidoreductase.